Consider the following 154-residue polypeptide: D-aminoacyl-tRNA deacylase (154 aa).

A Gly-cisPro motif, important for rejection of L-amino acids motif is present at residues 137–138 (GP).

The protein belongs to the DTD family. In terms of assembly, homodimer.

It is found in the cytoplasm. It carries out the reaction glycyl-tRNA(Ala) + H2O = tRNA(Ala) + glycine + H(+). The enzyme catalyses a D-aminoacyl-tRNA + H2O = a tRNA + a D-alpha-amino acid + H(+). Its function is as follows. An aminoacyl-tRNA editing enzyme that deacylates mischarged D-aminoacyl-tRNAs. Also deacylates mischarged glycyl-tRNA(Ala), protecting cells against glycine mischarging by AlaRS. Acts via tRNA-based rather than protein-based catalysis; rejects L-amino acids rather than detecting D-amino acids in the active site. By recycling D-aminoacyl-tRNA to D-amino acids and free tRNA molecules, this enzyme counteracts the toxicity associated with the formation of D-aminoacyl-tRNA entities in vivo and helps enforce protein L-homochirality. This is D-aminoacyl-tRNA deacylase from Thermomicrobium roseum (strain ATCC 27502 / DSM 5159 / P-2).